The primary structure comprises 277 residues: NH(3)-dependent NAD(+) synthetase (277 aa).

Position 46 to 53 (46 to 53 (GISGGQDS)) interacts with ATP. Asp52 contributes to the Mg(2+) binding site. Deamido-NAD(+) is bound at residue Arg142. Thr162 serves as a coordination point for ATP. Glu167 lines the Mg(2+) pocket. 2 residues coordinate deamido-NAD(+): Lys175 and Asp182. 2 residues coordinate ATP: Lys191 and Thr213. 263–264 (HK) is a binding site for deamido-NAD(+).

Belongs to the NAD synthetase family. In terms of assembly, homodimer.

The enzyme catalyses deamido-NAD(+) + NH4(+) + ATP = AMP + diphosphate + NAD(+) + H(+). It functions in the pathway cofactor biosynthesis; NAD(+) biosynthesis; NAD(+) from deamido-NAD(+) (ammonia route): step 1/1. In terms of biological role, catalyzes the ATP-dependent amidation of deamido-NAD to form NAD. Uses ammonia as a nitrogen source. This chain is NH(3)-dependent NAD(+) synthetase, found in Corynebacterium glutamicum (strain ATCC 13032 / DSM 20300 / JCM 1318 / BCRC 11384 / CCUG 27702 / LMG 3730 / NBRC 12168 / NCIMB 10025 / NRRL B-2784 / 534).